The sequence spans 113 residues: U11-theraphotoxin-Hhn1a (113 aa).

The N-terminal stretch at Met-1 to Ala-21 is a signal peptide. Positions Asp-22–Arg-74 are excised as a propeptide. Residues Glu-61–Asp-83 form a disordered region. Cystine bridges form between Cys-75-Cys-90, Cys-82-Cys-95, and Cys-89-Cys-110.

The protein belongs to the neurotoxin 14 (magi-1) family. 01 (HNTX-16) subfamily. As to expression, expressed by the venom gland.

The protein localises to the secreted. Functionally, probable ion channel inhibitor. This chain is U11-theraphotoxin-Hhn1a, found in Cyriopagopus hainanus (Chinese bird spider).